A 609-amino-acid polypeptide reads, in one-letter code: Glutamine--fructose-6-phosphate aminotransferase [isomerizing] (609 aa).

The active-site Nucleophile; for GATase activity is Cys-2. The region spanning 2–218 is the Glutamine amidotransferase type-2 domain; it reads CGIVGAVAQR…EGDVVEVTRR (217 aa). SIS domains follow at residues 286-426 and 458-599; these read ADAL…LKGA and LAEG…VDQP. Lys-604 acts as the For Fru-6P isomerization activity in catalysis.

Homodimer.

Its subcellular location is the cytoplasm. The enzyme catalyses D-fructose 6-phosphate + L-glutamine = D-glucosamine 6-phosphate + L-glutamate. Functionally, catalyzes the first step in hexosamine metabolism, converting fructose-6P into glucosamine-6P using glutamine as a nitrogen source. This Yersinia pestis protein is Glutamine--fructose-6-phosphate aminotransferase [isomerizing].